Reading from the N-terminus, the 534-residue chain is Arginine--tRNA ligase (534 aa).

Positions 120 to 130 (ANPTGFLHLGH) match the 'HIGH' region motif.

Belongs to the class-I aminoacyl-tRNA synthetase family. Monomer.

It localises to the cytoplasm. The catalysed reaction is tRNA(Arg) + L-arginine + ATP = L-arginyl-tRNA(Arg) + AMP + diphosphate. This is Arginine--tRNA ligase from Mesomycoplasma hyopneumoniae (strain 232) (Mycoplasma hyopneumoniae).